The sequence spans 226 residues: Cytidylate kinase (226 aa).

10-18 (GPASSGKST) is a binding site for ATP.

The protein belongs to the cytidylate kinase family. Type 1 subfamily.

It is found in the cytoplasm. It carries out the reaction CMP + ATP = CDP + ADP. The catalysed reaction is dCMP + ATP = dCDP + ADP. The sequence is that of Cytidylate kinase from Streptococcus pyogenes serotype M5 (strain Manfredo).